Reading from the N-terminus, the 493-residue chain is MAEEKALNDQMLARRQKLATIVDDLHLDPFGKRFERTAKAQELHDLYDNSTLETLESEQHEVVIAGRMIAKRGAGKVIFADFRDVSGKIQVYAKRDDLGENYPIIKRADLGDFLGIKGIIMKTEAGELTVLATELTHLTKALRPMPDKFHGIADVETRYRKRYLDLIANEESFKKFQLRSKIISAIRAYMDSQDFMEVETPILQTEAGGAAARPFITHHNALNIDMYMRIATELYLKRLVVGGFERVYEIGRIFRNEGMDPKHNPEFTTMETYAAYMDFTDVMDETEGIFKAAASVVSDDLKVTYQGTEIDLGSNFARKHMVDLIKEQTGIDFWQDMSVEAAQKLADDKHVKYEKYWGVGHIINAFFEEFVEDTLVQPTFVYGHPVEVSPLAKRNAEDSRFTDRFELFIMGSEYGNAFTELNDPIDQRARFEAQVAERENGNDEAENIDEDFIEALEYGMPPTGGLGIGIDRLVMLLTDSDTIRDVLLFPTMR.

Positions 406 and 413 each coordinate Mg(2+).

Belongs to the class-II aminoacyl-tRNA synthetase family. Homodimer. The cofactor is Mg(2+).

Its subcellular location is the cytoplasm. It carries out the reaction tRNA(Lys) + L-lysine + ATP = L-lysyl-tRNA(Lys) + AMP + diphosphate. The sequence is that of Lysine--tRNA ligase from Leuconostoc citreum (strain KM20).